We begin with the raw amino-acid sequence, 436 residues long: GTPase Obg (436 aa).

Positions 1-159 (MAFVDQATIE…LKVKLELRVL (159 aa)) constitute an Obg domain. One can recognise an OBG-type G domain in the interval 160 to 335 (ADVGLVGFPS…LLLKVADLLD (176 aa)). GTP-binding positions include 166 to 173 (GFPSAGKS), 191 to 195 (FTTID), 213 to 216 (DLPG), 285 to 288 (TKMD), and 316 to 318 (SSV). Mg(2+) is bound by residues S173 and T193. The OCT domain occupies 357–436 (KDDHQSTDFQ…GADFAFEFEE (80 aa)).

This sequence belongs to the TRAFAC class OBG-HflX-like GTPase superfamily. OBG GTPase family. Monomer. It depends on Mg(2+) as a cofactor.

It localises to the cytoplasm. In terms of biological role, an essential GTPase which binds GTP, GDP and possibly (p)ppGpp with moderate affinity, with high nucleotide exchange rates and a fairly low GTP hydrolysis rate. Plays a role in control of the cell cycle, stress response, ribosome biogenesis and in those bacteria that undergo differentiation, in morphogenesis control. The sequence is that of GTPase Obg from Oenococcus oeni (strain ATCC BAA-331 / PSU-1).